The primary structure comprises 161 residues: Protein-export protein SecB (161 aa).

The protein belongs to the SecB family. As to quaternary structure, homotetramer, a dimer of dimers. One homotetramer interacts with 1 SecA dimer.

Its subcellular location is the cytoplasm. In terms of biological role, one of the proteins required for the normal export of preproteins out of the cell cytoplasm. It is a molecular chaperone that binds to a subset of precursor proteins, maintaining them in a translocation-competent state. It also specifically binds to its receptor SecA. This is Protein-export protein SecB from Coxiella burnetii (strain Dugway 5J108-111).